The sequence spans 478 residues: Zinc metalloproteinase/disintegrin (478 aa).

An N-terminal signal peptide occupies residues 1 to 20 (MIQVLLVTICLAVFPYQGSS). Positions 21–194 (KTLKSGNVND…KASQLNLTPE (174 aa)) are excised as a propeptide. Gln195 bears the Pyrrolidone carboxylic acid mark. Residues 201 to 397 (RYIELVIVAD…RNPQCILNQP (197 aa)) form the Peptidase M12B domain. Ca(2+) is bound by residues Glu204 and Asp288. Cystine bridges form between Cys312–Cys392, Cys352–Cys376, and Cys354–Cys359. Position 337 (His337) interacts with Zn(2+). Residue Glu338 is part of the active site. Residues His341 and His347 each contribute to the Zn(2+) site. Cys392 and Asn395 together coordinate Ca(2+). Positions 398–413 (LRTDTVSTPVSGNELL) are excised as a propeptide. One can recognise a Disintegrin domain in the interval 405 to 478 (TPVSGNELLQ…SDCPRNPYKD (74 aa)). 4 disulfides stabilise this stretch: Cys420-Cys443, Cys434-Cys440, Cys439-Cys464, and Cys452-Cys471. Positions 456-458 (VGD) match the Cell attachment site; atypical (VGD) motif.

The protein belongs to the venom metalloproteinase (M12B) family. P-II subfamily. P-IIe sub-subfamily. In terms of assembly, monomer (metalloproteinase). Heterodimer; disulfide-linked (disintegrin). Zn(2+) is required as a cofactor. Expressed by the venom gland.

The protein resides in the secreted. Its activity is regulated as follows. Fibrinolytic and caseinolytic activities are inhibited by Cd(2+), Cu(2+) and Co(2+) ions. Not inhibited by Mg(2+), Ca(2+) and Ba(2+). Also inhibited by EDTA, EGTA and 1,10-phenanthroline. Fibrinolytic and fibrinogenolytic metalloproteinase that hydrolyzes the Aalpha-chain and more slowly the Bbeta-chain of fibrin and fibrinogen. Its fibrinolytic activity is direct, without any plasminogen activation. Also hydrolyzes casein and B-chain of oxidized insulin. Inhibits ADP-induced and collagen-induced platelet aggregation. Shows low hemorrhagic activity. Cleaves the plasma proteinase inhibitors alpha(2)-macroglobulin (A2M) and pregnancy zone protein (PZP), and is inhibited by them. The metalloprotease has no strict P1-P1' specificity requirement. Hydrolysis at sites with a Pro residue at P1 is observed with bradykinin, substance P, PZP and alpha chain fibrinogen (FGA). Its function is as follows. Poor inhibitor of platelet aggregation. The disintegrin inhibits the adhesion of the alpha-4/beta-1 (ITGA4/ITGB1) integrin to VCAM-1. Inhibition on alpha-2b/beta-3 (ITGA2B/ITGB3) is low. The chain is Zinc metalloproteinase/disintegrin from Macrovipera lebetinus (Levantine viper).